A 179-amino-acid chain; its full sequence is tRNA (cytidine(56)-2'-O)-methyltransferase (179 aa).

S-adenosyl-L-methionine contacts are provided by residues Leu82, 112–116 (GAEKV), and 130–137 (VGNQPHSE).

This sequence belongs to the aTrm56 family. As to quaternary structure, homodimer.

Its subcellular location is the cytoplasm. It carries out the reaction cytidine(56) in tRNA + S-adenosyl-L-methionine = 2'-O-methylcytidine(56) in tRNA + S-adenosyl-L-homocysteine + H(+). Specifically catalyzes the AdoMet-dependent 2'-O-ribose methylation of cytidine at position 56 in tRNAs. The protein is tRNA (cytidine(56)-2'-O)-methyltransferase of Methanococcus maripaludis (strain DSM 14266 / JCM 13030 / NBRC 101832 / S2 / LL).